Here is a 98-residue protein sequence, read N- to C-terminus: NADH-ubiquinone oxidoreductase chain 4L (98 aa).

Transmembrane regions (helical) follow at residues 1–21, 29–49, and 61–81; these read MTLIHMNILMAFSMSLVGLLM, ALLCLEGMMLSLFVLATLTIL, and IILLVFAACEAAIGLALLVMV.

Belongs to the complex I subunit 4L family. Core subunit of respiratory chain NADH dehydrogenase (Complex I) which is composed of 45 different subunits.

It is found in the mitochondrion inner membrane. The catalysed reaction is a ubiquinone + NADH + 5 H(+)(in) = a ubiquinol + NAD(+) + 4 H(+)(out). Functionally, core subunit of the mitochondrial membrane respiratory chain NADH dehydrogenase (Complex I) which catalyzes electron transfer from NADH through the respiratory chain, using ubiquinone as an electron acceptor. Part of the enzyme membrane arm which is embedded in the lipid bilayer and involved in proton translocation. This Balaenoptera bonaerensis (Antarctic minke whale) protein is NADH-ubiquinone oxidoreductase chain 4L (MT-ND4L).